The primary structure comprises 176 residues: Large ribosomal subunit protein uL6 (176 aa).

It belongs to the universal ribosomal protein uL6 family. In terms of assembly, part of the 50S ribosomal subunit.

Functionally, this protein binds to the 23S rRNA, and is important in its secondary structure. It is located near the subunit interface in the base of the L7/L12 stalk, and near the tRNA binding site of the peptidyltransferase center. The sequence is that of Large ribosomal subunit protein uL6 from Burkholderia vietnamiensis (strain G4 / LMG 22486) (Burkholderia cepacia (strain R1808)).